A 248-amino-acid chain; its full sequence is Pyridoxine 5'-phosphate synthase (248 aa).

N12 is a 3-amino-2-oxopropyl phosphate binding site. Residue D14–H15 coordinates 1-deoxy-D-xylulose 5-phosphate. R23 contacts 3-amino-2-oxopropyl phosphate. H48 serves as the catalytic Proton acceptor. 1-deoxy-D-xylulose 5-phosphate contacts are provided by R50 and H55. E75 serves as the catalytic Proton acceptor. A 1-deoxy-D-xylulose 5-phosphate-binding site is contributed by T105. The Proton donor role is filled by H196. 3-amino-2-oxopropyl phosphate contacts are provided by residues G197 and G218–H219.

Belongs to the PNP synthase family. As to quaternary structure, homooctamer; tetramer of dimers.

It is found in the cytoplasm. The enzyme catalyses 3-amino-2-oxopropyl phosphate + 1-deoxy-D-xylulose 5-phosphate = pyridoxine 5'-phosphate + phosphate + 2 H2O + H(+). Its pathway is cofactor biosynthesis; pyridoxine 5'-phosphate biosynthesis; pyridoxine 5'-phosphate from D-erythrose 4-phosphate: step 5/5. In terms of biological role, catalyzes the complicated ring closure reaction between the two acyclic compounds 1-deoxy-D-xylulose-5-phosphate (DXP) and 3-amino-2-oxopropyl phosphate (1-amino-acetone-3-phosphate or AAP) to form pyridoxine 5'-phosphate (PNP) and inorganic phosphate. This chain is Pyridoxine 5'-phosphate synthase, found in Pseudomonas aeruginosa (strain UCBPP-PA14).